The sequence spans 129 residues: uncharacterized protein (129 aa).

This is an uncharacterized protein from Mycoplasma pneumoniae (strain ATCC 29342 / M129 / Subtype 1) (Mycoplasmoides pneumoniae).